We begin with the raw amino-acid sequence, 175 residues long: Cuticle protein 16.5, isoform A (175 aa).

Tandem repeats lie at residues 17 to 20 (AAPA), 25 to 28 (AAPA), 31 to 34 (AAPA), 38 to 41 (AAPA), 44 to 47 (AAPA), 51 to 54 (AAPA), 57 to 60 (AAPA), 64 to 67 (AAPA), 70 to 73 (AAPA), 77 to 80 (AAPA), 83 to 86 (AAPA), 91 to 94 (AAPA), 99 to 102 (AAPA), 106 to 109 (AAPA), 134 to 137 (AAPA), 144 to 147 (AAPA), 151 to 154 (AAPA), 158 to 161 (AAPA), and 165 to 168 (AAPA).

Component of the cuticle of migratory locust which contains more than 100 different structural proteins. This Locusta migratoria (Migratory locust) protein is Cuticle protein 16.5, isoform A.